A 64-amino-acid polypeptide reads, in one-letter code: Large ribosomal subunit protein uL29 (64 aa).

It belongs to the universal ribosomal protein uL29 family.

This is Large ribosomal subunit protein uL29 from Burkholderia mallei (strain NCTC 10247).